Consider the following 131-residue polypeptide: Small ribosomal subunit protein uS8 (131 aa).

The protein belongs to the universal ribosomal protein uS8 family. Part of the 30S ribosomal subunit. Contacts proteins S5 and S12.

One of the primary rRNA binding proteins, it binds directly to 16S rRNA central domain where it helps coordinate assembly of the platform of the 30S subunit. The protein is Small ribosomal subunit protein uS8 of Chlorobium phaeovibrioides (strain DSM 265 / 1930) (Prosthecochloris vibrioformis (strain DSM 265)).